We begin with the raw amino-acid sequence, 846 residues long: Protein IRS1 (846 aa).

4 disordered regions span residues 1–82, 366–385, 606–626, and 714–846; these read MAQR…NFWH, TGTA…ETEA, WLME…ATMP, and QVIP…HVHH. Positions 16–25 are enriched in gly residues; the sequence is RGRGAGGPSG. Residues 26–56 are compositionally biased toward low complexity; it reads VGSSPPSSCVPMGAPSTAGTGASAAATTTPG. A compositionally biased stretch (acidic residues) spans 722-732; it reads EPEDDDEDPTY. The segment covering 832-846 has biased composition (basic residues); that stretch reads RPKKCQTHAPHHVHH.

Belongs to the herpesviridae US22 family. Interacts (via N-terminus) with the viral DNA polymerase accessory subunit UL44. Interacts (via C-terminus) with host EIF2AK2/PKR.

The protein resides in the virion. Its subcellular location is the host cytoplasm. It localises to the host nucleus. Functionally, inhibits the establishment of the antiviral state in the infected cell. Prevents the phosphorylation of the host eukaryotic translation initiation factor eIF-2alpha and thus the shutoff of viral and cellular protein synthesis by directly interacting with EIF2AK2/PKR. May also participate in viral DNA replication by interacting with the DNA polymerase accessory protein and the lytic origin of replication, oriLyt. The chain is Protein IRS1 (IRS1) from Homo sapiens (Human).